We begin with the raw amino-acid sequence, 379 residues long: Histone-lysine N-methyltransferase ATXR5 (379 aa).

A compositionally biased stretch (low complexity) spans 1 to 15 (MATWNASSPAASPCS). Residues 1 to 42 (MATWNASSPAASPCSSRRRTKAPARRPSSESPPPRKMKSMAE) are disordered. Residues 1-44 (MATWNASSPAASPCSSRRRTKAPARRPSSESPPPRKMKSMAEIM) constitute a chloroplast transit peptide. The PHD-type zinc-finger motif lies at 64–114 (NVTCEKCGSGEGDDELLLCDKCDRGFHMKCLRPIVVRVPIGTWLCVDCSDQ). The short motif at 122–129 (QKKILHFF) is the PIP motif element. M221 is a substrate binding site. The SET domain maps to 245–367 (PPLVVVFDPL…KGERLYYDYN (123 aa)). S-adenosyl-L-methionine contacts are provided by residues 255-257 (EGY) and 317-321 (RFING). Residue R339 participates in substrate binding. Y366 contacts S-adenosyl-L-methionine. 369–370 (YE) provides a ligand contact to substrate. Y373 contacts S-adenosyl-L-methionine.

Belongs to the class V-like SAM-binding methyltransferase superfamily. Histone-lysine methyltransferase family. TRX/MLL subfamily. Isoform 1 but not isoform 2 interacts with PCNA1 and PCNA2. Interacts (via PHD domain) with HTR1 (via N-terminus). Isoform 2 interacts with IPS1. As to expression, expressed in leaves, roots, stems, flowers, siliques and developing pollen. Up-regulated in tissues where cell division is active.

The protein resides in the nucleus. The protein localises to the plastid. It localises to the chloroplast. The catalysed reaction is L-lysyl(27)-[histone H3] + S-adenosyl-L-methionine = N(6)-methyl-L-lysyl(27)-[histone H3] + S-adenosyl-L-homocysteine + H(+). Its function is as follows. Histone methyltransferase that specifically monomethylates 'Lys-27' of histone H3 (H3K27me1). Has much higher activity on nucleosomes containing H3.1 than H3.3. Involved in the formation of constitutive heterochromatin and the silencing of heterochromatic elements. Influences which sets of rRNA gene variants are expressed or silenced. This chain is Histone-lysine N-methyltransferase ATXR5 (ATXR5), found in Arabidopsis thaliana (Mouse-ear cress).